Here is a 45-residue protein sequence, read N- to C-terminus: Turripeptide OL11-like (45 aa).

Cystine bridges form between C1–C31, C5–C24, and C13–C45. Residues 1–45 (CMTICTMEYWPVCGSDGKTYPNKCHLTSTACTSQKDITVLHEGKC) enclose the Kazal-like domain.

This sequence belongs to the conopeptide P-like superfamily. Expressed by the venom duct.

The protein localises to the secreted. Functionally, acts as a neurotoxin by inhibiting an ion channel. May also act as a serine protease inhibitor, since it possess the kazal serine protease inhibitor signature. The polypeptide is Turripeptide OL11-like (Lophiotoma albina (Sea snail)).